The primary structure comprises 416 residues: Serine/threonine-protein kinase 26 (416 aa).

A2 carries the N-acetylalanine modification. S4 carries the phosphoserine modification. The Protein kinase domain occupies 24-274 (FTKLERIGKG…AKELLKHKFI (251 aa)). ATP contacts are provided by residues 30–38 (IGKGSFGEV) and K53. Residue D144 is the Proton acceptor of the active site. Residue T178 is modified to Phosphothreonine; by autocatalysis. The interval 296 to 343 (AEGHSDEESDSEGSDSESSSRESNPHPEWSFTTVRKKPDPKKLQNGEE) is disordered. A phosphoserine mark is found at S300, S304, S306, S309, and S325. 2 positions are modified to phosphothreonine: T327 and T328. A compositionally biased stretch (basic and acidic residues) spans 331–340 (KKPDPKKLQN).

This sequence belongs to the protein kinase superfamily. STE Ser/Thr protein kinase family. STE20 subfamily. Homodimer. Interacts with PDCD10. Interacts with GOLGA2. Interacts with CTTNBP2NL. Interacts with RIPOR1 (via C-terminus); this interaction occurs in a PDCD10-dependent and Rho-independent manner. Interacts with PDCD10; this interaction is required for the association of STK26 with RIPOR1. Part of the core of STRIPAK complexes composed of PP2A catalytic and scaffolding subunits, the striatins (PP2A regulatory subunits), the striatin-associated proteins MOB4, STRIP1 and STRIP2, PDCD10 and members of the STE20 kinases, such as STK24 and STK26. Requires Mg(2+) as cofactor.

It is found in the cytoplasm. The protein resides in the golgi apparatus. It catalyses the reaction L-seryl-[protein] + ATP = O-phospho-L-seryl-[protein] + ADP + H(+). It carries out the reaction L-threonyl-[protein] + ATP = O-phospho-L-threonyl-[protein] + ADP + H(+). With respect to regulation, interaction with Golgi matrix protein GOLGA2 leads to autophosphorylation on Thr-178, possibly as a consequence of stabilization of dimer formation. May also be activated by C-terminal cleavage. Serine/threonine-protein kinase that acts as a mediator of cell growth. Modulates apoptosis. In association with STK24 negatively regulates Golgi reorientation in polarized cell migration upon RHO activation. Phosphorylates ATG4B at 'Ser-383', thereby increasing autophagic flux. Part of the striatin-interacting phosphatase and kinase (STRIPAK) complexes. STRIPAK complexes have critical roles in protein (de)phosphorylation and are regulators of multiple signaling pathways including Hippo, MAPK, nuclear receptor and cytoskeleton remodeling. Different types of STRIPAK complexes are involved in a variety of biological processes such as cell growth, differentiation, apoptosis, metabolism and immune regulation. The polypeptide is Serine/threonine-protein kinase 26 (Mus musculus (Mouse)).